The following is a 365-amino-acid chain: Aminomethyltransferase (365 aa).

Belongs to the GcvT family. As to quaternary structure, the glycine cleavage system is composed of four proteins: P, T, L and H.

The catalysed reaction is N(6)-[(R)-S(8)-aminomethyldihydrolipoyl]-L-lysyl-[protein] + (6S)-5,6,7,8-tetrahydrofolate = N(6)-[(R)-dihydrolipoyl]-L-lysyl-[protein] + (6R)-5,10-methylene-5,6,7,8-tetrahydrofolate + NH4(+). Functionally, the glycine cleavage system catalyzes the degradation of glycine. This chain is Aminomethyltransferase, found in Yersinia pestis bv. Antiqua (strain Antiqua).